The primary structure comprises 353 residues: Protein-glutamate methylesterase/protein-glutamine glutaminase (353 aa).

Residues 6-123 (RVLVIDDSAL…ARGLKAMLSE (118 aa)) enclose the Response regulatory domain. Aspartate 57 bears the 4-aspartylphosphate mark. Residues 159–351 (AESTDKVIAI…PRIVDLLSER (193 aa)) enclose the CheB-type methylesterase domain. Active-site residues include serine 171, histidine 197, and aspartate 293.

Belongs to the CheB family. Post-translationally, phosphorylated by CheA. Phosphorylation of the N-terminal regulatory domain activates the methylesterase activity.

It localises to the cytoplasm. The enzyme catalyses [protein]-L-glutamate 5-O-methyl ester + H2O = L-glutamyl-[protein] + methanol + H(+). The catalysed reaction is L-glutaminyl-[protein] + H2O = L-glutamyl-[protein] + NH4(+). Its function is as follows. Involved in chemotaxis. Part of a chemotaxis signal transduction system that modulates chemotaxis in response to various stimuli. Catalyzes the demethylation of specific methylglutamate residues introduced into the chemoreceptors (methyl-accepting chemotaxis proteins or MCP) by CheR. Also mediates the irreversible deamidation of specific glutamine residues to glutamic acid. This is Protein-glutamate methylesterase/protein-glutamine glutaminase from Syntrophotalea carbinolica (strain DSM 2380 / NBRC 103641 / GraBd1) (Pelobacter carbinolicus).